Here is a 388-residue protein sequence, read N- to C-terminus: Dual-specificity RNA methyltransferase RlmN (388 aa).

Catalysis depends on E109, which acts as the Proton acceptor. The Radical SAM core domain occupies 115–354 (EDDRATLCVS…TIVRKTRGDD (240 aa)). Cysteines 122 and 359 form a disulfide. Residues C129, C133, and C136 each contribute to the [4Fe-4S] cluster site. S-adenosyl-L-methionine is bound by residues 183 to 184 (GE), S215, 237 to 239 (SLH), and N316. The S-methylcysteine intermediate role is filled by C359.

This sequence belongs to the radical SAM superfamily. RlmN family. [4Fe-4S] cluster is required as a cofactor.

It localises to the cytoplasm. The enzyme catalyses adenosine(2503) in 23S rRNA + 2 reduced [2Fe-2S]-[ferredoxin] + 2 S-adenosyl-L-methionine = 2-methyladenosine(2503) in 23S rRNA + 5'-deoxyadenosine + L-methionine + 2 oxidized [2Fe-2S]-[ferredoxin] + S-adenosyl-L-homocysteine. It carries out the reaction adenosine(37) in tRNA + 2 reduced [2Fe-2S]-[ferredoxin] + 2 S-adenosyl-L-methionine = 2-methyladenosine(37) in tRNA + 5'-deoxyadenosine + L-methionine + 2 oxidized [2Fe-2S]-[ferredoxin] + S-adenosyl-L-homocysteine. Specifically methylates position 2 of adenine 2503 in 23S rRNA and position 2 of adenine 37 in tRNAs. m2A2503 modification seems to play a crucial role in the proofreading step occurring at the peptidyl transferase center and thus would serve to optimize ribosomal fidelity. This Salmonella typhimurium (strain LT2 / SGSC1412 / ATCC 700720) protein is Dual-specificity RNA methyltransferase RlmN.